Here is a 453-residue protein sequence, read N- to C-terminus: UDP-glucose 6-dehydrogenase (453 aa).

NAD(+) contacts are provided by residues 2-19 (RLCV…AACF), valine 11, threonine 121, and glutamate 158. Residues 154-158 (EFLKE), lysine 210, asparagine 214, 255-259 (FIYAG), and glycine 263 each bind substrate. Cysteine 266 acts as the Nucleophile in catalysis. Residue lysine 269 participates in NAD(+) binding. Lysine 327 contacts substrate. Arginine 334 contributes to the NAD(+) binding site.

It belongs to the UDP-glucose/GDP-mannose dehydrogenase family.

The catalysed reaction is UDP-alpha-D-glucose + 2 NAD(+) + H2O = UDP-alpha-D-glucuronate + 2 NADH + 3 H(+). It participates in nucleotide-sugar biosynthesis; UDP-alpha-D-glucuronate biosynthesis; UDP-alpha-D-glucuronate from UDP-alpha-D-glucose: step 1/1. The protein operates within bacterial outer membrane biogenesis; lipopolysaccharide biosynthesis. The chain is UDP-glucose 6-dehydrogenase (udg) from Pseudomonas aeruginosa (strain ATCC 15692 / DSM 22644 / CIP 104116 / JCM 14847 / LMG 12228 / 1C / PRS 101 / PAO1).